The following is a 129-amino-acid chain: Small ribosomal subunit protein uS12 (129 aa).

Residues 1-25 form a disordered region; sequence MPTYNQLVRFGRKSKTRKTKSPALE. The segment covering 10 to 20 has biased composition (basic residues); that stretch reads FGRKSKTRKTK. Residue aspartate 89 is modified to 3-methylthioaspartic acid. Positions 109 to 129 are disordered; it reads GRKQGRSRYGTPRKQVAVTKK.

The protein belongs to the universal ribosomal protein uS12 family. As to quaternary structure, part of the 30S ribosomal subunit. Contacts proteins S8 and S17. May interact with IF1 in the 30S initiation complex.

In terms of biological role, with S4 and S5 plays an important role in translational accuracy. Interacts with and stabilizes bases of the 16S rRNA that are involved in tRNA selection in the A site and with the mRNA backbone. Located at the interface of the 30S and 50S subunits, it traverses the body of the 30S subunit contacting proteins on the other side and probably holding the rRNA structure together. The combined cluster of proteins S8, S12 and S17 appears to hold together the shoulder and platform of the 30S subunit. This chain is Small ribosomal subunit protein uS12, found in Rickettsia peacockii (strain Rustic).